A 377-amino-acid chain; its full sequence is Cytochrome b (377 aa).

4 helical membrane-spanning segments follow: residues 33-53 (FGSL…FLAM), 77-98 (WLIR…YLHT), 113-133 (WTMG…GYVL), and 178-198 (FFMI…VHLL). The heme b site is built by His-83 and His-97. Heme b-binding residues include His-182 and His-196. A ubiquinone is bound at residue His-201. The next 4 membrane-spanning stretches (helical) occupy residues 226 to 246 (YKDL…SLLS), 288 to 308 (LGGV…PLSS), 320 to 340 (FNQI…WIGA), and 347 to 367 (FIIM…LNPM).

It belongs to the cytochrome b family. The main subunits of complex b-c1 are: cytochrome b, cytochrome c1 and the Rieske protein. Heme b serves as cofactor.

The protein resides in the mitochondrion inner membrane. Functionally, component of the ubiquinol-cytochrome c reductase complex (complex III or cytochrome b-c1 complex) that is part of the mitochondrial respiratory chain. The b-c1 complex mediates electron transfer from ubiquinol to cytochrome c. Contributes to the generation of a proton gradient across the mitochondrial membrane that is then used for ATP synthesis. The protein is Cytochrome b (MT-CYB) of Tetrodontophora bielanensis (Giant springtail).